The chain runs to 518 residues: Retinal dehydrogenase 2 (518 aa).

Tyr-168 carries the post-translational modification Phosphotyrosine. NAD(+) contacts are provided by residues 184–186 (IPW), 210–213 (KPAE), and 264–266 (STE). Residue Glu-286 is the Proton acceptor of the active site. Cys-320 functions as the Nucleophile in the catalytic mechanism. Ser-351 carries the phosphoserine modification. NAD(+) is bound by residues 366-370 (KQYNK) and Glu-417.

This sequence belongs to the aldehyde dehydrogenase family. As to quaternary structure, homotetramer. Found in testis and less abundantly in lung, brain, heart, liver and kidney.

The protein localises to the cytoplasm. It catalyses the reaction retinal + NAD(+) + H2O = retinoate + NADH + 2 H(+). It carries out the reaction all-trans-retinal + NAD(+) + H2O = all-trans-retinoate + NADH + 2 H(+). The catalysed reaction is all-trans-13,14-dihydroretinal + NAD(+) + H2O = all-trans-13,14-dihydroretinoate + NADH + 2 H(+). The protein operates within cofactor metabolism; retinol metabolism. Its function is as follows. Catalyzes the NAD-dependent oxidation of aldehyde substrates, such as all-trans-retinal and all-trans-13,14-dihydroretinal, to their corresponding carboxylic acids, all-trans-retinoate and all-trans-13,14-dihydroretinoate, respectively. Retinoate signaling is critical for the transcriptional control of many genes, for instance it is crucial for initiation of meiosis in both male and female. Recognizes retinal as substrate, both in its free form and when bound to cellular retinol-binding protein. Lacks activity with benzaldehyde, acetaldehyde and octanal. Displays complete lack of activity with citral. In Rattus norvegicus (Rat), this protein is Retinal dehydrogenase 2 (Aldh1a2).